A 353-amino-acid chain; its full sequence is uncharacterized protein (353 aa).

Residues 69–106 are disordered; it reads ISSATPSSTPPATRASSRLQPPKGHQAGGSNSQQQQPS. Residues 70 to 86 show a composition bias toward low complexity; the sequence is SSATPSSTPPATRASSR. Residues 319-353 are a coiled coil; sequence GENKEKKMREMSRVYREMTRQMDDTRRDLDRLNQG.

This is an uncharacterized protein from Gibberella zeae (strain ATCC MYA-4620 / CBS 123657 / FGSC 9075 / NRRL 31084 / PH-1) (Wheat head blight fungus).